Consider the following 612-residue polypeptide: Adherence factor (612 aa).

Low complexity-rich tracts occupy residues M1–S18, S47–Q68, L94–T106, Y115–Q141, Q182–S203, and S218–T228. Disordered regions lie at residues M1 to Q20, A46 to Q68, L94 to F143, P179 to K273, K443 to N480, S497 to N527, and S546 to Y612. Over residues A230–S240 the composition is skewed to polar residues. Residues T254–N272 show a composition bias toward low complexity. Basic and acidic residues predominate over residues K443–Q457. 2 stretches are compositionally biased toward polar residues: residues A465–N480 and S497–I512. Basic residues predominate over residues N555 to Q571. A compositionally biased stretch (low complexity) spans P585–L606.

Functionally, surface antigen mediating adhesion and aggregation in S.cerevisiae. This Candida albicans (strain SC5314 / ATCC MYA-2876) (Yeast) protein is Adherence factor (ADF1).